The chain runs to 404 residues: Phosphoglycerate kinase (404 aa).

Residues 22-24, arginine 37, 60-63, arginine 120, and arginine 160 contribute to the substrate site; these read DFN and HLGR. Residues lysine 215, glutamate 333, and 360-363 each bind ATP; that span reads GGDS.

This sequence belongs to the phosphoglycerate kinase family. As to quaternary structure, monomer.

The protein resides in the cytoplasm. The catalysed reaction is (2R)-3-phosphoglycerate + ATP = (2R)-3-phospho-glyceroyl phosphate + ADP. The protein operates within carbohydrate degradation; glycolysis; pyruvate from D-glyceraldehyde 3-phosphate: step 2/5. In Latilactobacillus sakei subsp. sakei (strain 23K) (Lactobacillus sakei subsp. sakei), this protein is Phosphoglycerate kinase.